The primary structure comprises 251 residues: Protein DEEPER ROOTING 1 (251 aa).

The IGT motif signature appears at 46 to 52; sequence SLLAIGT. The stretch at 64–105 forms a coiled coil; it reads VENSSDNVQSVQDTVKFTEEEVDKIRKEFETLLAIKDQAEAQ.

It belongs to the LAZY family.

In terms of biological role, involved in the control of root growth angle. Involved in cell elongation in the root tip that causes asymmetric root growth and downward bending of the root in response to gravity. The sequence is that of Protein DEEPER ROOTING 1 from Oryza sativa subsp. japonica (Rice).